Here is a 1342-residue protein sequence, read N- to C-terminus: Putative aldehyde oxidase-like protein (1342 aa).

Residues 1–23 (MSDCNSGGGERRPNARATDAPPV) form a disordered region. The region spanning 221–408 (ISSPREGWYC…LSIFIPHWAS (188 aa)) is the FAD-binding PCMH-type domain.

Belongs to the xanthine dehydrogenase family.

This Oryza sativa subsp. japonica (Rice) protein is Putative aldehyde oxidase-like protein.